The following is an 83-amino-acid chain: Small ribosomal subunit protein uS17 (83 aa).

The protein belongs to the universal ribosomal protein uS17 family. Part of the 30S ribosomal subunit.

Functionally, one of the primary rRNA binding proteins, it binds specifically to the 5'-end of 16S ribosomal RNA. The chain is Small ribosomal subunit protein uS17 from Magnetococcus marinus (strain ATCC BAA-1437 / JCM 17883 / MC-1).